We begin with the raw amino-acid sequence, 173 residues long: NADH-ubiquinone oxidoreductase chain 6 (173 aa).

Transmembrane regions (helical) follow at residues 1 to 21 (MVYFMFIMLVGLILGLMAVAS), 25 to 45 (PYFAALGLVVAAGVGCGLLVG), 53 to 73 (LVLFLIYLGGMLVVFAYTAAL), 82 to 102 (WGDWSVLLYVSVYLLGIFFVG), and 141 to 161 (GIMLVLGGWVLLLTLFVILEL).

Belongs to the complex I subunit 6 family.

It localises to the mitochondrion membrane. The catalysed reaction is a ubiquinone + NADH + 5 H(+)(in) = a ubiquinol + NAD(+) + 4 H(+)(out). Its function is as follows. Core subunit of the mitochondrial membrane respiratory chain NADH dehydrogenase (Complex I) that is believed to belong to the minimal assembly required for catalysis. Complex I functions in the transfer of electrons from NADH to the respiratory chain. The immediate electron acceptor for the enzyme is believed to be ubiquinone. The protein is NADH-ubiquinone oxidoreductase chain 6 (MT-ND6) of Squalus acanthias (Spiny dogfish).